Consider the following 198-residue polypeptide: Large ribosomal subunit protein bL21 (198 aa).

This sequence belongs to the bacterial ribosomal protein bL21 family. In terms of assembly, part of the 50S ribosomal subunit. Contacts protein L20.

In terms of biological role, this protein binds to 23S rRNA in the presence of protein L20. The chain is Large ribosomal subunit protein bL21 from Ruegeria sp. (strain TM1040) (Silicibacter sp.).